Reading from the N-terminus, the 205-residue chain is MGGKWSKKSRVEWPEVRKRMRETPAAAKGVGAVSQDLDKYGAVTSSNTSSTNASCAWLEAQEEGDVGFPVRPQVPLRPMTYKAAFDLSFFLKEKGGLDGLIHSQKRQEILDLWVYHTQGFFPDWQNYTPGPGIRYPLTFGWCYKLVPVDPAEVEEATGGENNSLLHPICQHGVDDEEKEVLMWKFDSTLALKHRAYELHPEFYKD.

Gly-2 carries the N-myristoyl glycine; by host lipid modification. Residue Ser-6 is modified to Phosphoserine; by host. Positions 62–65 (EEGD) are acidic; interacts with host PACS1 and PACS2; stabilizes the interaction of NEF/MHC-I with host AP1M1; necessary for MHC-I internalization. Residues 69 to 78 (PVRPQVPLRP) form an SH3-binding; interaction with Src family tyrosine kinases region. A PxxP; stabilizes the interaction of NEF/MHC-I with host AP1M1; necessary for MHC-I internalization motif is present at residues 72-75 (PQVP). Positions 108-124 (EILDLWVYHTQGFFPDW) are mediates dimerization, Nef-PTE1 interaction. Residues 148 to 180 (VDPAEVEEATGGENNSLLHPICQHGVDDEEKEV) form a binding to ATP6V1H region. A Dileucine internalization motif; necessary for CD4 internalization motif is present at residues 164 to 165 (LL). Residues 174 to 175 (DD) carry the Diacidic; necessary for CD4 internalization motif.

The protein belongs to the lentivirus primate group Nef protein family. As to quaternary structure, monomer; cytosolic form. Homodimer; membrane bound form. Interacts with Nef associated p21-activated kinase (PAK2); this interaction activates PAK2. Associates with the Nef-MHC-I-AP1 complex; this complex is required for MHC-I internalization. Interacts (via C-terminus) with host PI3-kinase. Interacts with host PACS1; this interaction seems to be weak. Interacts with host PACS2. Interacts with host LCK and MAPK3; these interactions inhibit the kinase activity of the latter. Interacts with host ATP6V1H; this interaction may play a role in CD4 endocytosis. Associates with the CD4-Nef-AP2 complex; this complex is required for CD4 internalization. Interacts with host AP2 subunit alpha and AP2 subunit sigma2. Interacts with TCR-zeta chain; this interaction up-regulates the Fas ligand (FasL) surface expression. Interacts with host HCK, LYN, and SRC; these interactions activate the Src family kinases. Interacts with MAP3K5; this interaction inhibits the Fas and TNFR-mediated death signals. Interacts with beta-COP and PTE1. Interacts with human RACK1; this increases Nef phosphorylation by PKC. Interacts with TP53; this interaction decreases the half-life of TP53, protecting the infected cell against p53-mediated apoptosis. Post-translationally, the virion-associated Nef proteins are cleaved by the viral protease to release the soluble C-terminal core protein. Nef is probably cleaved concomitantly with viral structural proteins on maturation of virus particles. In terms of processing, myristoylated. Phosphorylated on serine residues, probably by host PKCdelta and theta.

The protein resides in the host cell membrane. It localises to the virion. Its subcellular location is the secreted. The protein localises to the host Golgi apparatus membrane. Its function is as follows. Factor of infectivity and pathogenicity, required for optimal virus replication. Alters numerous pathways of T-lymphocyte function and down-regulates immunity surface molecules in order to evade host defense and increase viral infectivity. Alters the functionality of other immunity cells, like dendritic cells, monocytes/macrophages and NK cells. Functionally, in infected CD4(+) T-lymphocytes, down-regulates the surface MHC-I, mature MHC-II, CD4, CD28, CCR5 and CXCR4 molecules. Mediates internalization and degradation of host CD4 through the interaction of with the cytoplasmic tail of CD4, the recruitment of AP-2 (clathrin adapter protein complex 2), internalization through clathrin coated pits, and subsequent transport to endosomes and lysosomes for degradation. Diverts host MHC-I molecules to the trans-Golgi network-associated endosomal compartments by an endocytic pathway to finally target them for degradation. MHC-I down-regulation may involve AP-1 (clathrin adapter protein complex 1) or possibly Src family kinase-ZAP70/Syk-PI3K cascade recruited by PACS2. In consequence infected cells are masked for immune recognition by cytotoxic T-lymphocytes. Decreasing the number of immune receptors also prevents reinfection by more HIV particles (superinfection). Down-regulates host SERINC3 and SERINC5 thereby excluding these proteins from the viral particles. Virion infectivity is drastically higher when SERINC3 or SERINC5 are excluded from the viral envelope, because these host antiviral proteins impair the membrane fusion event necessary for subsequent virion penetration. In terms of biological role, bypasses host T-cell signaling by inducing a transcriptional program nearly identical to that of anti-CD3 cell activation. Interaction with TCR-zeta chain up-regulates the Fas ligand (FasL). Increasing surface FasL molecules and decreasing surface MHC-I molecules on infected CD4(+) cells send attacking cytotoxic CD8+ T-lymphocytes into apoptosis. Plays a role in optimizing the host cell environment for viral replication without causing cell death by apoptosis. Protects the infected cells from apoptosis in order to keep them alive until the next virus generation is ready to strike. Inhibits the Fas and TNFR-mediated death signals by blocking MAP3K5/ASK1. Decreases the half-life of TP53, protecting the infected cell against p53-mediated apoptosis. Inhibits the apoptotic signals regulated by the Bcl-2 family proteins through the formation of a Nef/PI3-kinase/PAK2 complex that leads to activation of PAK2 and induces phosphorylation of host BAD. Its function is as follows. Extracellular Nef protein targets CD4(+) T-lymphocytes for apoptosis by interacting with CXCR4 surface receptors. The polypeptide is Protein Nef (Human immunodeficiency virus type 1 group M subtype A (isolate U455) (HIV-1)).